The sequence spans 41 residues: trp operon leader peptide (41 aa).

Its function is as follows. This protein is involved in control of the biosynthesis of tryptophan. This is trp operon leader peptide (trpL) from Vibrio parahaemolyticus serotype O3:K6 (strain RIMD 2210633).